We begin with the raw amino-acid sequence, 502 residues long: UPF0371 protein CLM_0396 (502 aa).

Belongs to the UPF0371 family.

The chain is UPF0371 protein CLM_0396 from Clostridium botulinum (strain Kyoto / Type A2).